The primary structure comprises 233 residues: Probable cyclic nucleotide phosphodiesterase COSY_0614 (233 aa).

Positions 10, 12, 48, 78, 144, 183, and 185 each coordinate Fe cation. AMP contacts are provided by residues His12, Asp48, and 78-79 (NH). His185 provides a ligand contact to AMP.

It belongs to the cyclic nucleotide phosphodiesterase class-III family. Requires Fe(2+) as cofactor.

The polypeptide is Probable cyclic nucleotide phosphodiesterase COSY_0614 (Vesicomyosocius okutanii subsp. Calyptogena okutanii (strain HA)).